Here is a 339-residue protein sequence, read N- to C-terminus: Ribosomal RNA small subunit methyltransferase H (339 aa).

S-adenosyl-L-methionine is bound by residues 40-42, D58, F85, D106, and Q113; that span reads GGY.

Belongs to the methyltransferase superfamily. RsmH family.

The protein localises to the cytoplasm. The catalysed reaction is cytidine(1402) in 16S rRNA + S-adenosyl-L-methionine = N(4)-methylcytidine(1402) in 16S rRNA + S-adenosyl-L-homocysteine + H(+). Its function is as follows. Specifically methylates the N4 position of cytidine in position 1402 (C1402) of 16S rRNA. This chain is Ribosomal RNA small subunit methyltransferase H, found in Parvibaculum lavamentivorans (strain DS-1 / DSM 13023 / NCIMB 13966).